The sequence spans 56 residues: Conotoxin Cal6.41b (56 aa).

A signal peptide spans 1–23 (MSGSGAMLLGLLILVAMATSLDT). Disulfide bonds link C27/C41, C33/C50, and C40/C54.

Expressed by the venom duct.

The protein localises to the secreted. Probable neurotoxin. The polypeptide is Conotoxin Cal6.41b (Californiconus californicus (California cone)).